The chain runs to 254 residues: Ornithine decarboxylase antizyme (254 aa).

Belongs to the ODC antizyme family. In terms of assembly, interacts with ODC1 and thereby sterically blocks ODC homodimerization.

Its function is as follows. Ornithine decarboxylase (ODC) antizyme protein that negatively regulates ODC activity and intracellular polyamine biosynthesis and uptake in response to increased intracellular polyamine levels. Binds to ODC monomers, inhibiting the assembly of the functional ODC homodimer, and targets the monomers for ubiquitin-independent proteolytic destruction by the 26S proteasome. Required for cellular differentiation in neuronal and myogenic lineages during embryonic development. In Drosophila melanogaster (Fruit fly), this protein is Ornithine decarboxylase antizyme (Oda).